The chain runs to 303 residues: Recombination-associated protein RdgC (303 aa).

Belongs to the RdgC family.

The protein localises to the cytoplasm. The protein resides in the nucleoid. May be involved in recombination. This Yersinia pseudotuberculosis serotype O:1b (strain IP 31758) protein is Recombination-associated protein RdgC.